The chain runs to 512 residues: Chlorogenic acid esterase (512 aa).

An N-terminal signal peptide occupies residues 1–18 (MLLRLCIIATLLVSHCVA). N-linked (GlcNAc...) asparagine glycosylation is found at Asn47, Asn80, and Asn98. Cys92 and Cys120 are oxidised to a cystine. The active-site Acyl-ester intermediate is Ser230. Asn271 is a glycosylation site (N-linked (GlcNAc...) asparagine). Cys281 and Cys292 are disulfide-bonded. N-linked (GlcNAc...) asparagine glycans are attached at residues Asn295, Asn322, and Asn328. The active-site Charge relay system is Glu351. N-linked (GlcNAc...) asparagine glycans are attached at residues Asn391 and Asn402. The Charge relay system role is filled by His416. A glycan (N-linked (GlcNAc...) asparagine) is linked at Asn474.

Belongs to the type-B carboxylesterase/lipase family.

It localises to the secreted. The enzyme catalyses chlorogenate + H2O = L-quinate + (E)-caffeate + H(+). Extracellular chlorogenic acid esterase that releases caffeic acid from chlorogenic acid (CGA) contained in natural substrates such as apple marc and coffee pulp. Shows no activity towards 5-O-p-coumaroyl quinic acid, another quinic ester derivative, and rosmarinic acid, another caffeic ester derivative. The sequence is that of Chlorogenic acid esterase from Aspergillus niger.